The following is a 263-amino-acid chain: Putative hydro-lyase BPUM_0381 (263 aa).

It belongs to the D-glutamate cyclase family.

This Bacillus pumilus (strain SAFR-032) protein is Putative hydro-lyase BPUM_0381.